A 202-amino-acid chain; its full sequence is D-alanyl-D-alanine dipeptidase (202 aa).

Zn(2+) contacts are provided by His116 and Asp123. Glu181 acts as the Proton donor/acceptor in catalysis. His184 contacts Zn(2+).

It belongs to the peptidase M15D family. The cofactor is Zn(2+).

It catalyses the reaction D-alanyl-D-alanine + H2O = 2 D-alanine. Catalyzes hydrolysis of the D-alanyl-D-alanine dipeptide. The protein is D-alanyl-D-alanine dipeptidase (vanXB) of Enterococcus faecalis (strain ATCC 700802 / V583).